The primary structure comprises 149 residues: Ribonuclease pancreatic (149 aa).

The N-terminal stretch at 1-25 (MGLEKSLILFPLFVLLLGWVQPSLG) is a signal peptide. Positions 30–49 (AQKFERQHMDSSGSSNNSPT) are disordered. Positions 32 and 35 each coordinate substrate. His37 functions as the Proton acceptor in the catalytic mechanism. The span at 39–49 (DSSGSSNNSPT) shows a compositional bias: polar residues. Cystine bridges form between Cys51-Cys109, Cys65-Cys120, Cys83-Cys135, and Cys90-Cys97. Residue 66–70 (KPVNT) coordinates substrate. Residue Asn87 is glycosylated (N-linked (GlcNAc...) asparagine). Lys91 contributes to the substrate binding site. The Proton donor role is filled by His144.

This sequence belongs to the pancreatic ribonuclease family. Monomer. Interacts with and forms tight 1:1 complexes with RNH1. Dimerization of two such complexes may occur. Interaction with RNH1 inhibits this protein. In terms of tissue distribution, pancreas.

The protein resides in the secreted. The enzyme catalyses an [RNA] containing cytidine + H2O = an [RNA]-3'-cytidine-3'-phosphate + a 5'-hydroxy-ribonucleotide-3'-[RNA].. The catalysed reaction is an [RNA] containing uridine + H2O = an [RNA]-3'-uridine-3'-phosphate + a 5'-hydroxy-ribonucleotide-3'-[RNA].. Endonuclease that catalyzes the cleavage of RNA on the 3' side of pyrimidine nucleotides. Acts on single-stranded and double-stranded RNA. The sequence is that of Ribonuclease pancreatic (Rnase1) from Mus pahari (Gairdner's shrew-mouse).